We begin with the raw amino-acid sequence, 191 residues long: MPKSNDRINLTNQFLIAMPNMADPTFSGTVVYLCDHSERGALGLVINRPTDIDLQALFNRIDLKLEIEPLLHVPVYFGGPVQTERGFVLHDASENTYTSSMQVPGGLEMTTSKDVLEAVASGKGPERFLLTLGHAGWGAGQLEDEISKNGWLTVEADPKIVFDVPAENRFEAALALLGISSSMLSGDAGHA.

Belongs to the UPF0301 (AlgH) family.

This chain is UPF0301 protein Bphy_2327, found in Paraburkholderia phymatum (strain DSM 17167 / CIP 108236 / LMG 21445 / STM815) (Burkholderia phymatum).